A 465-amino-acid chain; its full sequence is uncharacterized protein (465 aa).

The TRAM domain occupies 13-71; sequence GPRPGLRLELQAIDLDRDGHGLARWQGWVVVVPGLLPGERAKVQLQQRQKSRWLSRISE. Residues C84, C90, C93, and C171 each coordinate [4Fe-4S] cluster. 4 residues coordinate S-adenosyl-L-methionine: Q294, Y324, E345, and D391. The active-site Nucleophile is the C418.

This sequence belongs to the class I-like SAM-binding methyltransferase superfamily. RNA M5U methyltransferase family.

This is an uncharacterized protein from Parasynechococcus marenigrum (strain WH8102).